The primary structure comprises 348 residues: Putative [LysW]-L-2-aminoadipate/[LysW]-L-glutamate phosphate reductase (348 aa).

9–12 (SGYV) contributes to the NADP(+) binding site. The active site involves C149. N315 serves as a coordination point for NADP(+).

Belongs to the NAGSA dehydrogenase family. Type 1 subfamily. LysY sub-subfamily.

It is found in the cytoplasm. It carries out the reaction [amino-group carrier protein]-C-terminal-N-(1-carboxy-5-oxopentan-1-yl)-L-glutamine + phosphate + NADP(+) = [amino-group carrier protein]-C-terminal-N-(1-carboxy-5-phosphooxy-5-oxopentan-1-yl)-L-glutamine + NADPH + H(+). It catalyses the reaction [amino-group carrier protein]-C-terminal-gamma-(L-glutamyl-5-semialdehyde)-L-glutamate + phosphate + NADP(+) = [amino-group carrier protein]-C-terminal-gamma-(5-phospho-L-glutamyl)-L-glutamate + NADPH + H(+). It participates in amino-acid biosynthesis; L-lysine biosynthesis via AAA pathway; L-lysine from L-alpha-aminoadipate (Thermus route): step 3/5. Its pathway is amino-acid biosynthesis; L-arginine biosynthesis. In terms of biological role, involved in both the arginine and lysine biosynthetic pathways. In Nitrosopumilus maritimus (strain SCM1), this protein is Putative [LysW]-L-2-aminoadipate/[LysW]-L-glutamate phosphate reductase.